The chain runs to 437 residues: Dolichyl-diphosphooligosaccharide--protein glycosyltransferase subunit wbp1 (437 aa).

An N-terminal signal peptide occupies residues 1–19 (MKSALCIALALTWSLLVQA). Over 20-401 (ARQTVLAVAD…FPRFLPHAYP (382 aa)) the chain is Lumenal. N-linked (GlcNAc...) asparagine glycans are attached at residues asparagine 275 and asparagine 289. Residues 402-422 (YYASCFSVLGAFLLFCGIWLL) form a helical membrane-spanning segment. At 423–437 (QKPAKPVVPSAKKQN) the chain is on the cytoplasmic side.

It belongs to the DDOST 48 kDa subunit family. In terms of assembly, component of the oligosaccharyltransferase (OST) complex.

It localises to the endoplasmic reticulum. The protein resides in the membrane. It participates in protein modification; protein glycosylation. In terms of biological role, subunit of the oligosaccharyl transferase (OST) complex that catalyzes the initial transfer of a defined glycan (Glc(3)Man(9)GlcNAc(2) in eukaryotes) from the lipid carrier dolichol-pyrophosphate to an asparagine residue within an Asn-X-Ser/Thr consensus motif in nascent polypeptide chains, the first step in protein N-glycosylation. N-glycosylation occurs cotranslationally and the complex associates with the Sec61 complex at the channel-forming translocon complex that mediates protein translocation across the endoplasmic reticulum (ER). All subunits are required for a maximal enzyme activity. This chain is Dolichyl-diphosphooligosaccharide--protein glycosyltransferase subunit wbp1 (wbp1), found in Schizosaccharomyces pombe (strain 972 / ATCC 24843) (Fission yeast).